Here is a 741-residue protein sequence, read N- to C-terminus: MATKFPKFSQDLAQDPTTRRIWYAMAMGNDFESHDGMTEENLYQKIFATHFGHLAIIFLWASSLLFHVAWQGNFEQWIKDPLHVRPIAHAIWDPHFGKPAIEAFTQAGANGPVNIAYSGVYHWWYTIGMRTNTELYTGSVFLLLFASLFLFAGWLHLQPKFRPSLAWFKSAESRLNHHLAGLFGVSSLAWAGHLIHVAIPESRGQHVGWDNFLTTAPHPAGLQPFFTGNWGVYAQNPDTAGHIFSTSQGSGTAILTFLGGFHPQTESLWLTDIAHHHLAIAVLFIVAGHMYRTNFGIGHSIKEMMNAKTFFGKPVEGPFNMPHQGIYDTYNNSLHFQLGWHLACLGVVTSWVAQHMYSLPSYAFIAKDYTTQAALYTHHQYIAIFLMVGAFAHGAIFLVRDYDPEQNKGNVLERVLQHKEAIISHLSWVSLFLGFHTLGLYVHNDVVVAFGTPEKQILIEPVFAQFIQAAHGKVLYGLDTLLSNPDSVAYTAYPNYANVWLPGWLDAINSGTNSLFLTIGPGDFLVHHAIALGLHTTTLILVKGALDARGSKLMPDKKDFGYAFPCDGPGRGGTCDISAWDSFYLSLFWALNTVGWVTFYWHWKHLGIWQGNVAQFNENSTYLMGWFRDYLWANSAQLINGYNPYGVNNLSVWAWMFLFGHLVWATGFMFLISWRGYWQELIETLVWAHERTPIANLIRWKDKPVALSIVQARVVGLAHFTVGYVLTYAAFLIASTAGKFG.

8 helical membrane passes run 46 to 69, 135 to 158, 175 to 199, 273 to 291, 334 to 357, 373 to 399, 421 to 443, and 524 to 542; these read IFAT…FHVA, LYTG…LHLQ, LNHH…HVAI, IAHH…GHMY, LHFQ…QHMY, AALY…IFLV, AIIS…LYVH, and FLVH…LILV. [4Fe-4S] cluster-binding residues include Cys566 and Cys575. A run of 2 helical transmembrane segments spans residues 582–603 and 650–672; these read SFYL…YWHW and LSVW…MFLI. Positions 661, 669, and 677 each coordinate chlorophyll a. Trp678 contributes to the phylloquinone binding site. The helical transmembrane segment at 714 to 734 threads the bilayer; that stretch reads VVGLAHFTVGYVLTYAAFLIA.

This sequence belongs to the PsaA/PsaB family. As to quaternary structure, the PsaA/B heterodimer binds the P700 chlorophyll special pair and subsequent electron acceptors. PSI consists of a core antenna complex that captures photons, and an electron transfer chain that converts photonic excitation into a charge separation. The cyanobacterial PSI reaction center is composed of one copy each of PsaA,B,C,D,E,F,I,J,K,L,M and X, and forms trimeric complexes. PSI electron transfer chain: 5 chlorophyll a, 1 chlorophyll a', 2 phylloquinones and 3 4Fe-4S clusters. PSI core antenna: 90 chlorophyll a, 22 carotenoids, 3 phospholipids and 1 galactolipid. P700 is a chlorophyll a/chlorophyll a' dimer, A0 is one or more chlorophyll a, A1 is one or both phylloquinones and FX is a shared 4Fe-4S iron-sulfur center. is required as a cofactor.

It is found in the cellular thylakoid membrane. It carries out the reaction reduced [plastocyanin] + hnu + oxidized [2Fe-2S]-[ferredoxin] = oxidized [plastocyanin] + reduced [2Fe-2S]-[ferredoxin]. Functionally, psaA and PsaB bind P700, the primary electron donor of photosystem I (PSI), as well as the electron acceptors A0, A1 and FX. PSI is a plastocyanin/cytochrome c6-ferredoxin oxidoreductase, converting photonic excitation into a charge separation, which transfers an electron from the donor P700 chlorophyll pair to the spectroscopically characterized acceptors A0, A1, FX, FA and FB in turn. Oxidized P700 is reduced on the lumenal side of the thylakoid membrane by plastocyanin or cytochrome c6. The protein is Photosystem I P700 chlorophyll a apoprotein A2 1 of Trichormus variabilis (strain ATCC 29413 / PCC 7937) (Anabaena variabilis).